Reading from the N-terminus, the 306-residue chain is tRNA pseudouridine synthase B (306 aa).

Asp43 (nucleophile) is an active-site residue.

Belongs to the pseudouridine synthase TruB family. Type 1 subfamily.

The catalysed reaction is uridine(55) in tRNA = pseudouridine(55) in tRNA. In terms of biological role, responsible for synthesis of pseudouridine from uracil-55 in the psi GC loop of transfer RNAs. This is tRNA pseudouridine synthase B from Syntrophobacter fumaroxidans (strain DSM 10017 / MPOB).